A 451-amino-acid polypeptide reads, in one-letter code: Tubulin gamma-1 chain (451 aa).

Phosphoserine; by BRSK1 is present on Ser-131. Ala-142–Gly-148 is a GTP binding site.

This sequence belongs to the tubulin family. Component of the gamma-tubulin ring complex (gTuRC) consisting of TUBGCP2, TUBGCP3, TUBGCP4, TUBGCP5 and TUBGCP6 and gamma-tubulin TUBG1 or TUBG2. TUBGCP2, TUBGCP3, TUBGCP4, TUBGCP5 and TUBGCP6 assemble in a 5:5:2:1:1 stoichiometry; each is associated with a gamma-tubulin, thereby arranging 14 gamma-tubulins in a helical manner. Gamma-tubulin at the first position is blocked by TUBGCP3 at the last position, allowing 13 protafilaments to grow into a microtubule. The gTuRC (via TUBGCP3 and TUBGCP6) interacts with ACTB and MZT1; the interactions form a luminal bridge that stabilizes the initial structure during complex assembly. The gTuRC (via TUBGCP2) interacts with MZT2A/MZT2B and CDK5RAP2 (via CM1 motif); the interactions play a role in gTuRC activation. Interacts with alpha-beta tubulin heterodimers; the interaction allows microtubules to nucleate from the gTuRC. Interacts with B9D2. Interacts with CDK5RAP2; the interaction is leading to centrosomal localization of TUBG1 and CDK5RAP2. Interacts with CIMAP3. Interacts with SAS6 and NUP62 at the centrosome. Interacts with EML3 (phosphorylated at 'Thr-881') and HAUS8. Interacts with DNM2; this interaction may participate in centrosome cohesion. Interacts with CCDC66. Post-translationally, phosphorylation at Ser-131 by BRSK1 regulates centrosome duplication, possibly by mediating relocation of gamma-tubulin and its associated proteins from the cytoplasm to the centrosome.

The protein localises to the cytoplasm. It is found in the cytoskeleton. Its subcellular location is the microtubule organizing center. It localises to the centrosome. The protein resides in the spindle. In terms of biological role, tubulin is the major constituent of microtubules, protein filaments consisting of alpha- and beta-tubulin heterodimers. Gamma-tubulin is a key component of the gamma-tubulin ring complex (gTuRC) which mediates microtubule nucleation. The gTuRC regulates the minus-end nucleation of alpha-beta tubulin heterodimers that grow into microtubule protafilaments, a critical step in centrosome duplication and spindle formation. The polypeptide is Tubulin gamma-1 chain (Mus musculus (Mouse)).